We begin with the raw amino-acid sequence, 289 residues long: tRNA dimethylallyltransferase (289 aa).

9-16 contributes to the ATP binding site; sequence GTTASGKT. 11–16 serves as a coordination point for substrate; that stretch reads TASGKT. The tract at residues 34-37 is interaction with substrate tRNA; the sequence is DSLC.

This sequence belongs to the IPP transferase family. In terms of assembly, monomer. Mg(2+) serves as cofactor.

The catalysed reaction is adenosine(37) in tRNA + dimethylallyl diphosphate = N(6)-dimethylallyladenosine(37) in tRNA + diphosphate. In terms of biological role, catalyzes the transfer of a dimethylallyl group onto the adenine at position 37 in tRNAs that read codons beginning with uridine, leading to the formation of N6-(dimethylallyl)adenosine (i(6)A). The sequence is that of tRNA dimethylallyltransferase from Campylobacter jejuni subsp. doylei (strain ATCC BAA-1458 / RM4099 / 269.97).